A 113-amino-acid chain; its full sequence is ATP-dependent Clp protease adapter protein ClpS (113 aa).

The protein belongs to the ClpS family. In terms of assembly, binds to the N-terminal domain of the chaperone ClpA.

Involved in the modulation of the specificity of the ClpAP-mediated ATP-dependent protein degradation. The protein is ATP-dependent Clp protease adapter protein ClpS of Corynebacterium diphtheriae (strain ATCC 700971 / NCTC 13129 / Biotype gravis).